The primary structure comprises 210 residues: 3-hexulose-6-phosphate synthase 1 (210 aa).

Belongs to the HPS/KGPDC family. HPS subfamily.

The enzyme catalyses D-ribulose 5-phosphate + formaldehyde = D-arabino-hex-3-ulose 6-phosphate. It functions in the pathway one-carbon metabolism; formaldehyde assimilation via RuMP pathway; D-fructose 6-phosphate from D-ribulose 5-phosphate and formaldehyde: step 1/2. In terms of biological role, catalyzes the condensation of ribulose 5-phosphate with formaldehyde to form 3-hexulose 6-phosphate. The chain is 3-hexulose-6-phosphate synthase 1 from Staphylococcus saprophyticus subsp. saprophyticus (strain ATCC 15305 / DSM 20229 / NCIMB 8711 / NCTC 7292 / S-41).